Consider the following 253-residue polypeptide: Phosphoglycerate mutase 2 (253 aa).

A Phosphothreonine modification is found at T3. Residues 10 to 17 (RHGESLWN), 23 to 24 (CG), R62, 89 to 92 (ERHY), K100, and 116 to 117 (RR) each bind substrate. H11 functions as the Tele-phosphohistidine intermediate in the catalytic mechanism. Residue S14 is modified to Phosphoserine. The active-site Proton donor/acceptor is the E89. S118 carries the phosphoserine modification. T121 carries the phosphothreonine modification. Y132 and Y133 each carry phosphotyrosine. At S135 the chain carries Phosphoserine. T152 is modified (phosphothreonine). 187–188 (GN) contributes to the substrate binding site.

This sequence belongs to the phosphoglycerate mutase family. BPG-dependent PGAM subfamily. As to quaternary structure, homodimer. Interacts with ENO1. Expressed in the testes (at protein level).

It carries out the reaction (2R)-2-phosphoglycerate = (2R)-3-phosphoglycerate. The enzyme catalyses (2R)-3-phospho-glyceroyl phosphate = (2R)-2,3-bisphosphoglycerate + H(+). Interconversion of 3- and 2-phosphoglycerate with 2,3-bisphosphoglycerate as the primer of the reaction. Can also catalyze the reaction of EC 5.4.2.4 (synthase), but with a reduced activity. In Mus musculus (Mouse), this protein is Phosphoglycerate mutase 2 (Pgam2).